We begin with the raw amino-acid sequence, 629 residues long: tRNA uridine 5-carboxymethylaminomethyl modification enzyme MnmG (629 aa).

Residues 13–18, V125, and S180 each bind FAD; that span reads GGGHAG. Residue 273 to 287 participates in NAD(+) binding; the sequence is GPRYCPSIEDKVMRF. Position 370 (Q370) interacts with FAD.

It belongs to the MnmG family. Homodimer. Heterotetramer of two MnmE and two MnmG subunits. FAD serves as cofactor.

Its subcellular location is the cytoplasm. Functionally, NAD-binding protein involved in the addition of a carboxymethylaminomethyl (cmnm) group at the wobble position (U34) of certain tRNAs, forming tRNA-cmnm(5)s(2)U34. The chain is tRNA uridine 5-carboxymethylaminomethyl modification enzyme MnmG from Salmonella dublin (strain CT_02021853).